A 549-amino-acid chain; its full sequence is Cation/acetate symporter ActP (549 aa).

A run of 13 helical transmembrane segments spans residues 33 to 53 (WQAI…TYWA), 77 to 97 (LAIA…ALVF), 103 to 123 (GLIY…LIAE), 148 to 168 (ILSA…QMVG), 183 to 203 (IAVV…GMLA), 206 to 226 (WVQI…AFMV), 262 to 282 (ISAL…PHIL), 303 to 323 (GFMG…IMLV), 355 to 375 (LFLG…VAGL), 404 to 424 (VSKI…MLFE), 428 to 448 (IAFM…PIIL), 464 to 484 (GGWL…TIWV), and 493 to 513 (IFPY…GIWF).

It belongs to the sodium:solute symporter (SSF) (TC 2.A.21) family.

The protein localises to the cell inner membrane. In terms of biological role, transports acetate. The sequence is that of Cation/acetate symporter ActP from Shigella boydii serotype 4 (strain Sb227).